The following is a 476-amino-acid chain: Cytosolic iron-sulfur assembly component 3 (476 aa).

The residue at position 2 (alanine 2) is an N-acetylalanine. Positions 24, 71, 74, 77, 190, 246, 395, and 399 each coordinate [4Fe-4S] cluster.

The protein belongs to the NARF family. As to quaternary structure, external component of the CIA complex. In the CIA complex, interacts directly with CIAO1 and MMS19.

Its function is as follows. Component of the cytosolic iron-sulfur protein assembly (CIA) complex, a multiprotein complex that mediates the incorporation of iron-sulfur cluster into extramitochondrial Fe/S proteins. Seems to negatively regulate the level of HIF1A expression, although this effect could be indirect. The chain is Cytosolic iron-sulfur assembly component 3 from Bos taurus (Bovine).